The sequence spans 248 residues: MNQTNFGFKKVDYTKKQGLVNSVFSNVADKYDLMNDLMSFGLHRLWKDEFSRQIPNLNSHILDVASGSGDIALKLAKKARDRGNNIALTLSDINEEMLKNAKKKAIDLNLFQNLKFTVASAEELPFSDNSFDYYTIAFGIRNVPDINKALKEAYRVLKPMGKFICLEFSKVKESYFKDFYKFYSFSIIPTIGQAITGNKEAYEYLVESIELFPSQDEFRIMLKEAGFEEVSYKNLSGGIVAIHSAYKI.

S-adenosyl-L-methionine-binding residues include serine 68 and aspartate 92.

The protein belongs to the class I-like SAM-binding methyltransferase superfamily. MenG/UbiE family.

The enzyme catalyses a 2-demethylmenaquinol + S-adenosyl-L-methionine = a menaquinol + S-adenosyl-L-homocysteine + H(+). The catalysed reaction is a 2-methoxy-6-(all-trans-polyprenyl)benzene-1,4-diol + S-adenosyl-L-methionine = a 5-methoxy-2-methyl-3-(all-trans-polyprenyl)benzene-1,4-diol + S-adenosyl-L-homocysteine + H(+). The protein operates within quinol/quinone metabolism; menaquinone biosynthesis; menaquinol from 1,4-dihydroxy-2-naphthoate: step 2/2. It participates in cofactor biosynthesis; ubiquinone biosynthesis. In terms of biological role, methyltransferase required for the conversion of demethylmenaquinol (DMKH2) to menaquinol (MKH2) and the conversion of 2-polyprenyl-6-methoxy-1,4-benzoquinol (DDMQH2) to 2-polyprenyl-3-methyl-6-methoxy-1,4-benzoquinol (DMQH2). This Rickettsia felis (strain ATCC VR-1525 / URRWXCal2) (Rickettsia azadi) protein is Ubiquinone/menaquinone biosynthesis C-methyltransferase UbiE.